A 230-amino-acid chain; its full sequence is Ribosome maturation factor RimM (230 aa).

Residues 149–230 enclose the PRC barrel domain; it reads ADEFYWVDLI…RVVVDWEADY (82 aa).

Belongs to the RimM family. In terms of assembly, binds ribosomal protein uS19.

The protein localises to the cytoplasm. Functionally, an accessory protein needed during the final step in the assembly of 30S ribosomal subunit, possibly for assembly of the head region. Essential for efficient processing of 16S rRNA. May be needed both before and after RbfA during the maturation of 16S rRNA. It has affinity for free ribosomal 30S subunits but not for 70S ribosomes. The sequence is that of Ribosome maturation factor RimM from Burkholderia mallei (strain NCTC 10229).